Reading from the N-terminus, the 116-residue chain is MLYISGARLVADKQVRIALTKMYGIGPKKAIQVCYRLGISGNIKIKELTKYQIDQMEQMIGQDHVVHWELKRGERADIERFISISCYRGIRHQDGLPLRGQRTHTNARTCRKQIRK.

It belongs to the universal ribosomal protein uS13 family. Part of the small ribosomal subunit.

The protein localises to the mitochondrion. Functionally, located at the top of the head of the small subunit, it contacts several helices of the 18S rRNA. This Daucus carota (Wild carrot) protein is Small ribosomal subunit protein uS13m (RPS13).